A 372-amino-acid chain; its full sequence is Aminomethyltransferase (372 aa).

It belongs to the GcvT family. In terms of assembly, the glycine cleavage system is composed of four proteins: P, T, L and H.

It catalyses the reaction N(6)-[(R)-S(8)-aminomethyldihydrolipoyl]-L-lysyl-[protein] + (6S)-5,6,7,8-tetrahydrofolate = N(6)-[(R)-dihydrolipoyl]-L-lysyl-[protein] + (6R)-5,10-methylene-5,6,7,8-tetrahydrofolate + NH4(+). The glycine cleavage system catalyzes the degradation of glycine. The sequence is that of Aminomethyltransferase from Burkholderia mallei (strain NCTC 10247).